We begin with the raw amino-acid sequence, 395 residues long: MNPEFLPASGASRTVSIGDVVTEAGVTIFDAELRYFAFYDSPDGAADYAEFSAGPEPGLSPEERPIVLIEHALTGDGNAADWWADMVGPNKPIDTTRYLVLCANVLGGCQGSTGPSSPHPDGQAWGSRFPGLSIRDMVTAERQLLERVGVTKIHALIGASMGGARVLEWSLMHPEMINAALPIAVSARASAWQIGLQSSQIRFIEADPAWHGGDYYDTGEVPSHGLGQARRIAHLTYRGELEVDERFGVDPQNGENPYGPYRDPHQRFAVESYLDRQAEKLVARFDAGSYVVLTDALNRHDVGRSRGGMNAALGSCEVPTMVVGVDTDILYPLHQQEHLSRNLGDFIGMSKITSPTGHDGFLIESRQMGQALAKFLAKAEIIAEGTEGAEGTARA.

The 299-residue stretch at Pro-65–Ile-363 folds into the AB hydrolase-1 domain. Ser-160 (nucleophile) is an active-site residue. Arg-230 contacts substrate. Residues Asp-328 and His-358 contribute to the active site. Asp-359 provides a ligand contact to substrate.

It belongs to the AB hydrolase superfamily. MetX family. Homodimer.

The protein localises to the cytoplasm. The enzyme catalyses L-homoserine + acetyl-CoA = O-acetyl-L-homoserine + CoA. It participates in amino-acid biosynthesis; L-methionine biosynthesis via de novo pathway; O-acetyl-L-homoserine from L-homoserine: step 1/1. In terms of biological role, transfers an acetyl group from acetyl-CoA to L-homoserine, forming acetyl-L-homoserine. In Corynebacterium jeikeium (strain K411), this protein is Homoserine O-acetyltransferase.